The sequence spans 746 residues: WD repeat-containing and planar cell polarity effector protein fritz homolog (746 aa).

2 WD repeats span residues 326–374 (IQCV…TLLA) and 375–414 (QTELLPSLISCHPSGAILLVGSNQGELQIFDMALSPINIQ).

It belongs to the WD repeat fritz family. Component of the CPLANE (ciliogenesis and planar polarity effectors) complex, composed of INTU, FUZ and WDPCP. Interacts with CPLANE1.

The protein resides in the cell membrane. The protein localises to the cytoplasm. It is found in the cytoskeleton. Its subcellular location is the cilium axoneme. It localises to the cilium basal body. In terms of biological role, probable effector of the planar cell polarity signaling pathway which regulates the septin cytoskeleton in both ciliogenesis and collective cell movements. Together with FUZ and WDPCP proposed to function as core component of the CPLANE (ciliogenesis and planar polarity effectors) complex involved in the recruitment of peripheral IFT-A proteins to basal bodies. Binds phosphatidylinositol 3-phosphate with highest affinity, followed by phosphatidylinositol 4-phosphate and phosphatidylinositol 5-phosphate. This is WD repeat-containing and planar cell polarity effector protein fritz homolog (WDPCP) from Homo sapiens (Human).